A 416-amino-acid polypeptide reads, in one-letter code: Multifunctional CCA protein (416 aa).

ATP-binding residues include Gly8 and Arg11. Gly8 and Arg11 together coordinate CTP. Asp21 and Asp23 together coordinate Mg(2+). Residues Arg91, Arg137, and Arg140 each contribute to the ATP site. Residues Arg91, Arg137, and Arg140 each contribute to the CTP site. The 108-residue stretch at 228 to 335 (SFIHTMLVLK…ITLFNRFDVW (108 aa)) folds into the HD domain.

It belongs to the tRNA nucleotidyltransferase/poly(A) polymerase family. Bacterial CCA-adding enzyme type 1 subfamily. In terms of assembly, monomer. Can also form homodimers and oligomers. Requires Mg(2+) as cofactor. Ni(2+) is required as a cofactor.

The catalysed reaction is a tRNA precursor + 2 CTP + ATP = a tRNA with a 3' CCA end + 3 diphosphate. It catalyses the reaction a tRNA with a 3' CCA end + 2 CTP + ATP = a tRNA with a 3' CCACCA end + 3 diphosphate. Catalyzes the addition and repair of the essential 3'-terminal CCA sequence in tRNAs without using a nucleic acid template. Adds these three nucleotides in the order of C, C, and A to the tRNA nucleotide-73, using CTP and ATP as substrates and producing inorganic pyrophosphate. tRNA 3'-terminal CCA addition is required both for tRNA processing and repair. Also involved in tRNA surveillance by mediating tandem CCA addition to generate a CCACCA at the 3' terminus of unstable tRNAs. While stable tRNAs receive only 3'-terminal CCA, unstable tRNAs are marked with CCACCA and rapidly degraded. This Haemophilus influenzae (strain PittGG) protein is Multifunctional CCA protein.